The chain runs to 623 residues: Chaperone protein DnaK (623 aa).

Residue Thr-175 is modified to Phosphothreonine; by autocatalysis. Residues 580–623 (PEGAQGAGFDPNNMGGANAGNASAGNDKKDDNVVDADFKVEDDK) form a disordered region. The span at 591–604 (NNMGGANAGNASAG) shows a compositional bias: low complexity. The segment covering 605–623 (NDKKDDNVVDADFKVEDDK) has biased composition (basic and acidic residues).

It belongs to the heat shock protein 70 family.

In terms of biological role, acts as a chaperone. The chain is Chaperone protein DnaK from Clostridium botulinum (strain Hall / ATCC 3502 / NCTC 13319 / Type A).